We begin with the raw amino-acid sequence, 670 residues long: Probable metal-nicotianamine transporter YSL4 (670 aa).

Transmembrane regions (helical) follow at residues 35 to 55, 59 to 79, 107 to 127, 151 to 171, 273 to 293, 318 to 338, 389 to 409, 416 to 436, 450 to 470, 507 to 527, 559 to 579, 601 to 621, and 636 to 656; these read ITIR…IITH, LTIG…FFFI, CVVS…LIAM, GLWW…FCLV, LVNC…WPFI, VFIA…KIIV, FAVS…PLIF, FVLC…YGAG, GLFI…GLAA, LGTA…WTAF, PKHC…VNLI, FYIG…MLVW, and VASG…ILSI.

This sequence belongs to the YSL (TC 2.A.67.2) family.

It is found in the membrane. Functionally, may be involved in the transport of nicotianamine-chelated metals. The chain is Probable metal-nicotianamine transporter YSL4 (YSL4) from Arabidopsis thaliana (Mouse-ear cress).